Reading from the N-terminus, the 322-residue chain is MQWYLVAALLTVLTSSQGILTTLSQSNGKYKYDYATIPFLAELFKLSFSSFFLWKECQSSSPPRMTKEWRSIRLYLVPSVIYLIHNNVQFATLTYVDPSTYQIMGNLKIVTTGILFRLVLKRKLSNLQWMAVVLLAVGTTTSQVKGCGDAPCDSLFSAPFQGYMLGILSACLSALAGVYTEYLMKKNNDSLYWQNVQLYTFGVIFNMGWLIYGDFKAGFERGPWWQRLFNGYSITTWMVVFNLGSTGLLVSWLMKYSDNIVKVYSTSMGMLLTMVLSVYLFNVRATLQLFLGIVICIISLQMYFMPVNMLVELPQALPVTSK.

Residues 1–2 (MQ) lie on the Cytoplasmic side of the membrane. Residues 3 to 23 (WYLVAALLTVLTSSQGILTTL) traverse the membrane as a helical segment. The Lumenal segment spans residues 24 to 33 (SQSNGKYKYD). Residues 34-54 (YATIPFLAELFKLSFSSFFLW) form a helical membrane-spanning segment. The Cytoplasmic segment spans residues 55–75 (KECQSSSPPRMTKEWRSIRLY). A helical transmembrane segment spans residues 76-96 (LVPSVIYLIHNNVQFATLTYV). Residues 97–100 (DPST) lie on the Lumenal side of the membrane. A helical transmembrane segment spans residues 101–120 (YQIMGNLKIVTTGILFRLVL). At 121–126 (KRKLSN) the chain is on the cytoplasmic side. Residues 127–144 (LQWMAVVLLAVGTTTSQV) traverse the membrane as a helical segment. At 145 to 157 (KGCGDAPCDSLFS) the chain is on the lumenal side. The helical transmembrane segment at 158–178 (APFQGYMLGILSACLSALAGV) threads the bilayer. The Cytoplasmic segment spans residues 179–198 (YTEYLMKKNNDSLYWQNVQL). The helical transmembrane segment at 199–219 (YTFGVIFNMGWLIYGDFKAGF) threads the bilayer. Over 220 to 233 (ERGPWWQRLFNGYS) the chain is Lumenal. Residues 234–254 (ITTWMVVFNLGSTGLLVSWLM) form a helical membrane-spanning segment. The Cytoplasmic portion of the chain corresponds to 255–262 (KYSDNIVK). Residues 263–283 (VYSTSMGMLLTMVLSVYLFNV) traverse the membrane as a helical segment. Topologically, residues 284–286 (RAT) are lumenal.

Belongs to the nucleotide-sugar transporter family. CMP-Sialate:CMP antiporter (TC 2.A.7.12) subfamily.

It localises to the golgi apparatus membrane. Sugar transporter involved in the transport of CMP-sialic acid from the cytoplasm into the Golgi. May transport important nucleotide sugars such as CMP-Kdo (2-keto-3-deoxy-D-manno-octulosonic acid) in physiological conditions. This chain is CMP-sialic acid transporter 1, found in Oryza sativa subsp. indica (Rice).